The chain runs to 169 residues: Protein UL138 (169 aa).

A helical transmembrane segment spans residues 8–28; the sequence is VGLPIIGVMLVLIVAILCYLA. The tract at residues 109-133 is disordered; the sequence is DRRAGSSSSSSVHVANQRNSVPPPD.

Interacts with host TNFR1. Interacts with host MRP1. Interacts with host UAF1/WDR48. Interacts with host STING1.

It is found in the host Golgi apparatus membrane. Its function is as follows. Plays an important role in the establishment of latent viral infection. Modulates the expression of several host cell surface receptors such as TNFR1, CD36 or the MRP1 transporter during productive infection. For instance, associates with host MRP1 and induces its lysosomal degradation. Plays an inhibitory role in the host cGAS/STING/TBK1 pathway and upstream of IRF3 phosphorylation and NF-kappa-B leading to inhibition of interferon beta production during both lytic and latent infections. Also participates in the establishment of latency by sustaining an innate immune response through phosphorylation and activation of host STAT1. This is Protein UL138 (UL138) from Human cytomegalovirus (strain Merlin) (HHV-5).